A 556-amino-acid chain; its full sequence is Formate--tetrahydrofolate ligase (556 aa).

ATP is bound at residue 65–72; that stretch reads TPAGEGKT.

Belongs to the formate--tetrahydrofolate ligase family.

The catalysed reaction is (6S)-5,6,7,8-tetrahydrofolate + formate + ATP = (6R)-10-formyltetrahydrofolate + ADP + phosphate. Its pathway is one-carbon metabolism; tetrahydrofolate interconversion. This is Formate--tetrahydrofolate ligase from Carboxydothermus hydrogenoformans (strain ATCC BAA-161 / DSM 6008 / Z-2901).